Here is a 189-residue protein sequence, read N- to C-terminus: Molybdopterin synthase catalytic subunit (189 aa).

Phosphoserine is present on Ser-20. Residues 143-144 (HR), Lys-159, and 166-168 (KKE) each bind substrate.

It belongs to the MoaE family. MOCS2B subfamily. In terms of assembly, heterotetramer; composed of 2 small (MOCS2A) and 2 large (MOCS2B) subunits.

The protein localises to the cytoplasm. It is found in the cytosol. It catalyses the reaction 2 [molybdopterin-synthase sulfur-carrier protein]-C-terminal-Gly-aminoethanethioate + cyclic pyranopterin phosphate + H2O = molybdopterin + 2 [molybdopterin-synthase sulfur-carrier protein]-C-terminal Gly-Gly + 2 H(+). It functions in the pathway cofactor biosynthesis; molybdopterin biosynthesis. In terms of biological role, catalytic subunit of the molybdopterin synthase complex, a complex that catalyzes the conversion of precursor Z into molybdopterin. Acts by mediating the incorporation of 2 sulfur atoms from thiocarboxylated MOCS2A into precursor Z to generate a dithiolene group. This chain is Molybdopterin synthase catalytic subunit, found in Bos taurus (Bovine).